We begin with the raw amino-acid sequence, 211 residues long: Probable nicotinate-nucleotide adenylyltransferase (211 aa).

Belongs to the NadD family.

It catalyses the reaction nicotinate beta-D-ribonucleotide + ATP + H(+) = deamido-NAD(+) + diphosphate. Its pathway is cofactor biosynthesis; NAD(+) biosynthesis; deamido-NAD(+) from nicotinate D-ribonucleotide: step 1/1. Functionally, catalyzes the reversible adenylation of nicotinate mononucleotide (NaMN) to nicotinic acid adenine dinucleotide (NaAD). This Shewanella frigidimarina (strain NCIMB 400) protein is Probable nicotinate-nucleotide adenylyltransferase.